Here is a 515-residue protein sequence, read N- to C-terminus: Nectin-1 (515 aa).

The signal sequence occupies residues 1–30 (MARMGLAGAAGRWWGLALGLTAFFLPGAHT). In terms of domain architecture, Ig-like V-type spans 31–141 (QVVQVNDSMY…GNRESQLNLT (111 aa)). Residues 31 to 355 (QVVQVNDSMY…GRRAGQVPTA (325 aa)) are Extracellular-facing. 8 N-linked (GlcNAc...) asparagine glycosylation sites follow: asparagine 36, asparagine 72, asparagine 139, asparagine 202, asparagine 286, asparagine 297, asparagine 307, and asparagine 332. Cysteine 51 and cysteine 124 form a disulfide bridge. Ig-like C2-type domains follow at residues 145–243 (KPTN…TLNV) and 247–334 (PEVT…VNIT). Disulfide bonds link cysteine 172–cysteine 226 and cysteine 269–cysteine 316. Residues 282 to 299 (WTTLNGSLPKGVEAQNRT) are interaction with FGFR. The chain crosses the membrane as a helical span at residues 356 to 376 (IIGGVVGSILLVLFVVGGIVV). The Cytoplasmic portion of the chain corresponds to 377 to 515 (ALCRRRHTFK…SFISKKEWYV (139 aa)). The disordered stretch occupies residues 400–486 (YSKAGIPQHH…DGYGDRTLGY (87 aa)). A phosphoserine mark is found at serine 422, serine 434, and serine 435. Tyrosine 436 bears the Phosphotyrosine mark. Residues 436–445 (YEEEEEEEGG) are compositionally biased toward acidic residues. The span at 446–464 (GGERKVGGPHPKYDEDAKR) shows a compositional bias: basic and acidic residues. Residue serine 509 is modified to Phosphoserine.

This sequence belongs to the nectin family. (Microbial infection) Interacts with herpes pseudorabies virus/PRV envelope glycoprotein D.

It is found in the cell membrane. The protein localises to the cell junction. It localises to the adherens junction. Its subcellular location is the presynaptic cell membrane. Its function is as follows. (Microbial infection) Acts as a receptor for herpes simplex virus 1/HHV-1, herpes simplex virus 2/HHV-2, and pseudorabies virus/PRV. The sequence is that of Nectin-1 from Sus scrofa (Pig).